The chain runs to 751 residues: Catalase-peroxidase (751 aa).

Residues M1 to D21 form a disordered region. The tryptophyl-tyrosyl-methioninium (Trp-Tyr) (with M-270) cross-link spans W90–Y244. The Proton acceptor role is filled by H91. The interval Y195–A227 is disordered. A compositionally biased stretch (basic and acidic residues) spans P214 to A227. Positions Y244–M270 form a cross-link, tryptophyl-tyrosyl-methioninium (Tyr-Met) (with W-90). H285 provides a ligand contact to heme b. The segment at G364–P385 is disordered.

The protein belongs to the peroxidase family. Peroxidase/catalase subfamily. As to quaternary structure, homodimer or homotetramer. The cofactor is heme b. In terms of processing, formation of the three residue Trp-Tyr-Met cross-link is important for the catalase, but not the peroxidase activity of the enzyme.

It carries out the reaction H2O2 + AH2 = A + 2 H2O. The enzyme catalyses 2 H2O2 = O2 + 2 H2O. Functionally, bifunctional enzyme with both catalase and broad-spectrum peroxidase activity. The chain is Catalase-peroxidase from Pseudomonas putida (strain ATCC 47054 / DSM 6125 / CFBP 8728 / NCIMB 11950 / KT2440).